The chain runs to 443 residues: Deoxyguanosinetriphosphate triphosphohydrolase-like protein (443 aa).

Residues 61 to 246 (RLTHSLEVAC…MEAADDICYG (186 aa)) form the HD domain.

The protein belongs to the dGTPase family. Type 3 subfamily.

In Pseudomonas aeruginosa (strain LESB58), this protein is Deoxyguanosinetriphosphate triphosphohydrolase-like protein.